Consider the following 155-residue polypeptide: SsrA-binding protein (155 aa).

This sequence belongs to the SmpB family.

It is found in the cytoplasm. Its function is as follows. Required for rescue of stalled ribosomes mediated by trans-translation. Binds to transfer-messenger RNA (tmRNA), required for stable association of tmRNA with ribosomes. tmRNA and SmpB together mimic tRNA shape, replacing the anticodon stem-loop with SmpB. tmRNA is encoded by the ssrA gene; the 2 termini fold to resemble tRNA(Ala) and it encodes a 'tag peptide', a short internal open reading frame. During trans-translation Ala-aminoacylated tmRNA acts like a tRNA, entering the A-site of stalled ribosomes, displacing the stalled mRNA. The ribosome then switches to translate the ORF on the tmRNA; the nascent peptide is terminated with the 'tag peptide' encoded by the tmRNA and targeted for degradation. The ribosome is freed to recommence translation, which seems to be the essential function of trans-translation. The chain is SsrA-binding protein from Lawsonia intracellularis (strain PHE/MN1-00).